The sequence spans 334 residues: tRNA-dihydrouridine(20/20a) synthase (334 aa).

Residues 18–20 (PMM) and Q71 each bind FMN. C101 functions as the Proton donor in the catalytic mechanism. FMN contacts are provided by residues K140, H172, 212–214 (NGG), and 234–235 (GR).

The protein belongs to the Dus family. DusA subfamily. Requires FMN as cofactor.

It carries out the reaction 5,6-dihydrouridine(20) in tRNA + NADP(+) = uridine(20) in tRNA + NADPH + H(+). The enzyme catalyses 5,6-dihydrouridine(20) in tRNA + NAD(+) = uridine(20) in tRNA + NADH + H(+). The catalysed reaction is 5,6-dihydrouridine(20a) in tRNA + NADP(+) = uridine(20a) in tRNA + NADPH + H(+). It catalyses the reaction 5,6-dihydrouridine(20a) in tRNA + NAD(+) = uridine(20a) in tRNA + NADH + H(+). In terms of biological role, catalyzes the synthesis of 5,6-dihydrouridine (D), a modified base found in the D-loop of most tRNAs, via the reduction of the C5-C6 double bond in target uridines. Specifically modifies U20 and U20a in tRNAs. This Xanthomonas axonopodis pv. citri (strain 306) protein is tRNA-dihydrouridine(20/20a) synthase.